Here is a 122-residue protein sequence, read N- to C-terminus: Large ribosomal subunit protein uL14 (122 aa).

Belongs to the universal ribosomal protein uL14 family. As to quaternary structure, part of the 50S ribosomal subunit. Forms a cluster with proteins L3 and L19. In the 70S ribosome, L14 and L19 interact and together make contacts with the 16S rRNA in bridges B5 and B8.

Its function is as follows. Binds to 23S rRNA. Forms part of two intersubunit bridges in the 70S ribosome. The sequence is that of Large ribosomal subunit protein uL14 from Thermotoga petrophila (strain ATCC BAA-488 / DSM 13995 / JCM 10881 / RKU-1).